Consider the following 504-residue polypeptide: Glycerol kinase (504 aa).

T14 is a binding site for ADP. The ATP site is built by T14, T15, and S16. A sn-glycerol 3-phosphate-binding site is contributed by T14. Residue R18 participates in ADP binding. Residues R84, E85, and Y136 each coordinate sn-glycerol 3-phosphate. Glycerol-binding residues include R84, E85, and Y136. Residue H232 is modified to Phosphohistidine; by HPr. D246 provides a ligand contact to sn-glycerol 3-phosphate. Glycerol contacts are provided by D246 and Q247. The ADP site is built by T268 and G311. Positions 268, 311, 315, and 412 each coordinate ATP. ADP contacts are provided by G412 and N416.

Belongs to the FGGY kinase family. As to quaternary structure, homotetramer and homodimer (in equilibrium). The phosphoenolpyruvate-dependent sugar phosphotransferase system (PTS), including enzyme I, and histidine-containing protein (HPr) are required for the phosphorylation, which leads to the activation of the enzyme.

It catalyses the reaction glycerol + ATP = sn-glycerol 3-phosphate + ADP + H(+). It functions in the pathway polyol metabolism; glycerol degradation via glycerol kinase pathway; sn-glycerol 3-phosphate from glycerol: step 1/1. With respect to regulation, activated by phosphorylation and inhibited by fructose 1,6-bisphosphate (FBP). Its function is as follows. Key enzyme in the regulation of glycerol uptake and metabolism. Catalyzes the phosphorylation of glycerol to yield sn-glycerol 3-phosphate. The protein is Glycerol kinase of Streptococcus pyogenes serotype M6 (strain ATCC BAA-946 / MGAS10394).